The sequence spans 92 residues: Small ribosomal subunit protein uS19 (92 aa).

This sequence belongs to the universal ribosomal protein uS19 family.

In terms of biological role, protein S19 forms a complex with S13 that binds strongly to the 16S ribosomal RNA. The polypeptide is Small ribosomal subunit protein uS19 (Prochlorococcus marinus (strain MIT 9215)).